A 131-amino-acid polypeptide reads, in one-letter code: Ribosome-binding factor A (131 aa).

It belongs to the RbfA family. In terms of assembly, monomer. Binds 30S ribosomal subunits, but not 50S ribosomal subunits or 70S ribosomes.

It is found in the cytoplasm. One of several proteins that assist in the late maturation steps of the functional core of the 30S ribosomal subunit. Associates with free 30S ribosomal subunits (but not with 30S subunits that are part of 70S ribosomes or polysomes). Required for efficient processing of 16S rRNA. May interact with the 5'-terminal helix region of 16S rRNA. In Thermotoga petrophila (strain ATCC BAA-488 / DSM 13995 / JCM 10881 / RKU-1), this protein is Ribosome-binding factor A.